The sequence spans 252 residues: Protein IRON-RELATED TRANSCRIPTION FACTOR 3 (252 aa).

Positions 36 to 49 (PRKVHKSEREKLKR) are basic motif. Residues 36–86 (PRKVHKSEREKLKRGHLNDLFGELGNMLEADRQSNGKACILTDTTRILRDL) enclose the bHLH domain. Residues 50–86 (GHLNDLFGELGNMLEADRQSNGKACILTDTTRILRDL) form a helix-loop-helix motif region. Positions 76-131 (LTDTTRILRDLLSQVKSLRQENSTLQNESNYVTMERNELQDENGALRSEISDLQNE) form a coiled coil. Residues 135-252 (RATGSPGWGH…GLPRMEDEQM (118 aa)) are disordered. Positions 162–176 (PSQQPMQPSPMTTST) are enriched in low complexity. The segment covering 208 to 219 (PAEDPEPSEDQE) has biased composition (acidic residues).

Belongs to the bHLH protein family.

It is found in the nucleus. In terms of biological role, transcription factor that acts as a negative regulator of the iron deficiency response. Suppresses the induction of iron deficiency responsive genes, such as NAS1, NAS2, IRO2, IRT1, YSL15, and NRAMP1. The protein is Protein IRON-RELATED TRANSCRIPTION FACTOR 3 of Oryza sativa subsp. japonica (Rice).